The sequence spans 363 residues: NADH-quinone oxidoreductase subunit H (363 aa).

Helical transmembrane passes span Val-29–Trp-49, Gly-62–Phe-82, Phe-96–Phe-116, Val-127–Gly-147, Ala-163–Ala-183, Phe-202–Val-222, Glu-238–Leu-257, Trp-278–Trp-298, Lys-299–Phe-319, and Phe-339–Ile-359.

This sequence belongs to the complex I subunit 1 family. In terms of assembly, NDH-1 is composed of 14 different subunits. Subunits NuoA, H, J, K, L, M, N constitute the membrane sector of the complex.

Its subcellular location is the cell inner membrane. The catalysed reaction is a quinone + NADH + 5 H(+)(in) = a quinol + NAD(+) + 4 H(+)(out). In terms of biological role, NDH-1 shuttles electrons from NADH, via FMN and iron-sulfur (Fe-S) centers, to quinones in the respiratory chain. The immediate electron acceptor for the enzyme in this species is believed to be ubiquinone. Couples the redox reaction to proton translocation (for every two electrons transferred, four hydrogen ions are translocated across the cytoplasmic membrane), and thus conserves the redox energy in a proton gradient. This subunit may bind ubiquinone. This chain is NADH-quinone oxidoreductase subunit H, found in Xanthomonas oryzae pv. oryzae (strain MAFF 311018).